The following is a 429-amino-acid chain: Histidine--tRNA ligase (429 aa).

Belongs to the class-II aminoacyl-tRNA synthetase family. Homodimer.

It is found in the cytoplasm. It catalyses the reaction tRNA(His) + L-histidine + ATP = L-histidyl-tRNA(His) + AMP + diphosphate + H(+). The protein is Histidine--tRNA ligase of Corynebacterium efficiens (strain DSM 44549 / YS-314 / AJ 12310 / JCM 11189 / NBRC 100395).